We begin with the raw amino-acid sequence, 508 residues long: Photosystem II CP47 reaction center protein (508 aa).

6 helical membrane passes run 21-36, 101-115, 140-156, 203-218, 237-252, and 457-472; these read SVHIMHTALVAGWAGS, IVFSGLCFLAAIWHW, GIHLFLSGVACFGFGAF, IAAGTLGILAGLFHLS, VLSSSIAAVFFAAFVV, and SFALLFFFGHIWHGAR.

It belongs to the PsbB/PsbC family. PsbB subfamily. In terms of assembly, PSII is composed of 1 copy each of membrane proteins PsbA, PsbB, PsbC, PsbD, PsbE, PsbF, PsbH, PsbI, PsbJ, PsbK, PsbL, PsbM, PsbT, PsbX, PsbY, PsbZ, Psb30/Ycf12, at least 3 peripheral proteins of the oxygen-evolving complex and a large number of cofactors. It forms dimeric complexes. It depends on Binds multiple chlorophylls. PSII binds additional chlorophylls, carotenoids and specific lipids. as a cofactor.

The protein localises to the plastid. The protein resides in the chloroplast thylakoid membrane. In terms of biological role, one of the components of the core complex of photosystem II (PSII). It binds chlorophyll and helps catalyze the primary light-induced photochemical processes of PSII. PSII is a light-driven water:plastoquinone oxidoreductase, using light energy to abstract electrons from H(2)O, generating O(2) and a proton gradient subsequently used for ATP formation. The sequence is that of Photosystem II CP47 reaction center protein from Gossypium barbadense (Sea Island cotton).